Reading from the N-terminus, the 252-residue chain is PF03932 family protein CutC (252 aa).

This sequence belongs to the CutC family.

It is found in the cytoplasm. The polypeptide is PF03932 family protein CutC (Pectobacterium atrosepticum (strain SCRI 1043 / ATCC BAA-672) (Erwinia carotovora subsp. atroseptica)).